The sequence spans 611 residues: Immunoglobulin superfamily member 8 (611 aa).

Residues 1-25 form the signal peptide; that stretch reads MGVPSPTPLSSLLLLLLILGTRCYA. Ig-like C2-type domains are found at residues 26–143, 160–284, 301–422, and 429–554; these read RQVH…AKVE, PRGR…WVQV, SQLA…EAAS, and PVHV…ADYS. Over 26–577 the chain is Extracellular; the sequence is RQVHVPRGPL…VYPYTHAVDT (552 aa). C47 and C125 are oxidised to a cystine. N-linked (GlcNAc...) asparagine glycosylation is found at N48 and N137. Residues C184 and C268 are joined by a disulfide bond. The EWI motif signature appears at 272 to 274; sequence EWI. 2 cysteine pairs are disulfide-bonded: C324–C404 and C460–C542. N-linked (GlcNAc...) asparagine glycosylation is present at N325. The residue at position 516 (S516) is a Phosphoserine. The helical transmembrane segment at 578-598 threads the bilayer; that stretch reads LFVPLLVGTGVALVTGASVLA. At 599-611 the chain is on the cytoplasmic side; that stretch reads TITCCFMKRMRKR. 2 S-palmitoyl cysteine lipidation sites follow: C602 and C603.

Interacts directly with CD82 and CD9/tetraspanin-29. Also interacts with integrin alpha-3/beta-1 and integrin alpha-4/beta-1. Part of a complex composed of CD9, PTGFRN and CD81. Interacts with CD81/tetraspanin-28. In terms of tissue distribution, expressed in lymphocytes as well as in many tissues with higher expression in brain. Detected in all regions of the brain with weak expression in the pituitary. Expressed selectively by neurons but not by glial cells. Expressed in myoblasts (at protein level).

The protein localises to the cell membrane. Member of the immunoglobulin superfamily (IgSF) that links tetraspanin-enriched microdomains to the actin cytoskeleton and plays several important roles in innate and adaptive immunity. Acts as an inducible receptor of HSPA8 on dendritic cells to enhance the CCL21/SLC-dependent migration of activated mature dendritic cells while attenuating their antigen-specific stimulatory capacities. In complex with alpha-actinins ACTN1 and ACTN4, regulates actin dynamics in the immune synapse and subsequent T-cell activation. Inhibits the entry of several viruses such as hepatitis C Virus (HCV) or HIV-1. Mechanistically, promotes a change in CD81 organization at the plasma membrane by significantly restricting its diffusion which in turn influences CD81 interaction with Claudin-1/CLDN1, preventing CLDN1 from acting as a co-receptor required for HCV entry. Accumulates at the presynaptic terminal, the producer cell side of the virological synapse, to prevent HIV-1 Env-mediated cell-cell fusion. Highly expressed on malignant cells with antigen presentation defects, interacts with NK receptor KLRA9 to suppress NK-cell cytotoxicity. May participate in the regulation of neurite outgrowth and maintenance of the neural network in the adult brain. In Mus musculus (Mouse), this protein is Immunoglobulin superfamily member 8 (Igsf8).